We begin with the raw amino-acid sequence, 129 residues long: uncharacterized protein (129 aa).

The span at 84 to 98 (QKTVSKKYKSRKGRR) shows a compositional bias: basic residues. The segment at 84–129 (QKTVSKKYKSRKGRRYTRERNISSEKNKTDKSHKVRVGKIQNINND) is disordered. The span at 99-115 (YTRERNISSEKNKTDKS) shows a compositional bias: basic and acidic residues.

This is an uncharacterized protein from Acanthamoeba polyphaga mimivirus (APMV).